The sequence spans 216 residues: Adenylate kinase (216 aa).

Position 10–15 (10–15) interacts with ATP; that stretch reads GAGKGT. Residues 30–59 are NMP; that stretch reads STGDIFRAAIKNQTPMGVEAKKFIDKGELV. AMP-binding positions include threonine 31, arginine 36, 57–59, 85–88, and glutamine 92; these read ELV and GFPR. Residues 126-164 form an LID region; it reads GRFICRNCGTTYHRLYNPTKVEGTCDVCGGHDFYQRDDD. Arginine 127 is a binding site for ATP. Positions 130 and 133 each coordinate Zn(2+). 136 to 137 contributes to the ATP binding site; it reads TY. The Zn(2+) site is built by cysteine 150 and cysteine 153. Positions 161 and 172 each coordinate AMP. ATP is bound at residue glutamine 200.

The protein belongs to the adenylate kinase family. In terms of assembly, monomer.

It localises to the cytoplasm. It carries out the reaction AMP + ATP = 2 ADP. It participates in purine metabolism; AMP biosynthesis via salvage pathway; AMP from ADP: step 1/1. In terms of biological role, catalyzes the reversible transfer of the terminal phosphate group between ATP and AMP. Plays an important role in cellular energy homeostasis and in adenine nucleotide metabolism. The sequence is that of Adenylate kinase from Limosilactobacillus fermentum (strain NBRC 3956 / LMG 18251) (Lactobacillus fermentum).